The following is a 40-amino-acid chain: uncharacterized protein (40 aa).

Positions 1-27 (MFPADVILQCFGFSVGIALVGYVISLF) are cleaved as a signal peptide.

This is an uncharacterized protein from Archaeoglobus fulgidus (strain ATCC 49558 / DSM 4304 / JCM 9628 / NBRC 100126 / VC-16).